The sequence spans 145 residues: Putative type I specificity subunit S.MpnORF289P C-terminus (145 aa).

This sequence belongs to the type-I restriction system S methylase family. As to quaternary structure, the methyltransferase is composed of M and S polypeptides.

In terms of biological role, the C-terminal section of a specificity (S) subunit of a type I methyltransferase (MTase); this subunit dictates DNA sequence specificity. The single R subunit has multiple frameshifts and is probably not expressed. In Mycoplasma pneumoniae (strain ATCC 29342 / M129 / Subtype 1) (Mycoplasmoides pneumoniae), this protein is Putative type I specificity subunit S.MpnORF289P C-terminus.